A 179-amino-acid polypeptide reads, in one-letter code: Peptidyl-tRNA hydrolase (179 aa).

Tyr-15 lines the tRNA pocket. His-20 acts as the Proton acceptor in catalysis. 3 residues coordinate tRNA: Tyr-66, Asn-68, and Asn-114.

It belongs to the PTH family. In terms of assembly, monomer.

The protein localises to the cytoplasm. The catalysed reaction is an N-acyl-L-alpha-aminoacyl-tRNA + H2O = an N-acyl-L-amino acid + a tRNA + H(+). Functionally, hydrolyzes ribosome-free peptidyl-tRNAs (with 1 or more amino acids incorporated), which drop off the ribosome during protein synthesis, or as a result of ribosome stalling. In terms of biological role, catalyzes the release of premature peptidyl moieties from peptidyl-tRNA molecules trapped in stalled 50S ribosomal subunits, and thus maintains levels of free tRNAs and 50S ribosomes. This chain is Peptidyl-tRNA hydrolase, found in Chlamydia trachomatis serovar L2b (strain UCH-1/proctitis).